Here is a 161-residue protein sequence, read N- to C-terminus: Urease accessory protein UreE (161 aa).

A disordered region spans residues 138-161 (RGAYHAHGGHSHDHGQGHHHHDHG).

It belongs to the UreE family.

It localises to the cytoplasm. Involved in urease metallocenter assembly. Binds nickel. Probably functions as a nickel donor during metallocenter assembly. The chain is Urease accessory protein UreE from Agrobacterium fabrum (strain C58 / ATCC 33970) (Agrobacterium tumefaciens (strain C58)).